A 189-amino-acid polypeptide reads, in one-letter code: Probable nicotinate-nucleotide adenylyltransferase (189 aa).

This sequence belongs to the NadD family.

The catalysed reaction is nicotinate beta-D-ribonucleotide + ATP + H(+) = deamido-NAD(+) + diphosphate. The protein operates within cofactor biosynthesis; NAD(+) biosynthesis; deamido-NAD(+) from nicotinate D-ribonucleotide: step 1/1. Catalyzes the reversible adenylation of nicotinate mononucleotide (NaMN) to nicotinic acid adenine dinucleotide (NaAD). This chain is Probable nicotinate-nucleotide adenylyltransferase, found in Staphylococcus aureus (strain N315).